The sequence spans 205 residues: Holliday junction branch migration complex subunit RuvA (205 aa).

The interval 1 to 64 (MIGRLSGILV…EDAQLLYGFI (64 aa)) is domain I. Residues 65–143 (TKQERALFRL…SLLEASAGSE (79 aa)) are domain II. Residues 144 to 156 (REFMLQSNYTPAA) form a flexible linker region. Positions 157 to 205 (AVDSAEEDAISALLSLGYKPAQASKSVSAAFKEGMSSETLIKAALKSML) are domain III.

Belongs to the RuvA family. In terms of assembly, homotetramer. Forms an RuvA(8)-RuvB(12)-Holliday junction (HJ) complex. HJ DNA is sandwiched between 2 RuvA tetramers; dsDNA enters through RuvA and exits via RuvB. An RuvB hexamer assembles on each DNA strand where it exits the tetramer. Each RuvB hexamer is contacted by two RuvA subunits (via domain III) on 2 adjacent RuvB subunits; this complex drives branch migration. In the full resolvosome a probable DNA-RuvA(4)-RuvB(12)-RuvC(2) complex forms which resolves the HJ.

The protein localises to the cytoplasm. The RuvA-RuvB-RuvC complex processes Holliday junction (HJ) DNA during genetic recombination and DNA repair, while the RuvA-RuvB complex plays an important role in the rescue of blocked DNA replication forks via replication fork reversal (RFR). RuvA specifically binds to HJ cruciform DNA, conferring on it an open structure. The RuvB hexamer acts as an ATP-dependent pump, pulling dsDNA into and through the RuvAB complex. HJ branch migration allows RuvC to scan DNA until it finds its consensus sequence, where it cleaves and resolves the cruciform DNA. This Shewanella frigidimarina (strain NCIMB 400) protein is Holliday junction branch migration complex subunit RuvA.